Reading from the N-terminus, the 808-residue chain is Digalactosyldiacylglycerol synthase 1, chloroplastic (808 aa).

A disordered region spans residues 1 to 23 (MVKETLIPPSSTSMTTGTSSSSS). The N-terminal 58 residues, 1–58 (MVKETLIPPSSTSMTTGTSSSSSLSMTLSSTNALSFLSKGWREVWDSADADLQLMRDR), are a transit peptide targeting the chloroplast. Over residues 10 to 23 (SSTSMTTGTSSSSS) the composition is skewed to low complexity.

This sequence belongs to the glycosyltransferase group 1 family. Glycosyltransferase 4 subfamily.

It localises to the plastid. The protein resides in the chloroplast outer membrane. The catalysed reaction is a 1,2-diacyl-3-O-(beta-D-galactosyl)-sn-glycerol + UDP-alpha-D-galactose = a 1,2-diacyl-3-O-[alpha-D-galactosyl-(1-&gt;6)-beta-D-galactosyl]-sn-glycerol + UDP + H(+). Involved in the synthesis of diacylglycerol galactolipids that are specifically found in thylakoid membranes. Specific for alpha-glycosidic linkages. Responsible for the final assembly of galactolipids in photosynthetic membranes. Digalactosyldiacylglycerol (DGDG) provides stability to the photosystem I (PSI) complex, especially to the PsaA, PsaB, PsaC, PsaL and PsaH subunits. The polypeptide is Digalactosyldiacylglycerol synthase 1, chloroplastic (Arabidopsis thaliana (Mouse-ear cress)).